A 452-amino-acid chain; its full sequence is UPF0210 protein CHY_1509 (452 aa).

Belongs to the UPF0210 family. In terms of assembly, homodimer.

This Carboxydothermus hydrogenoformans (strain ATCC BAA-161 / DSM 6008 / Z-2901) protein is UPF0210 protein CHY_1509.